A 244-amino-acid chain; its full sequence is Proteasome subunit alpha (244 aa).

Belongs to the peptidase T1A family. In terms of assembly, the 20S proteasome core is composed of 14 alpha and 14 beta subunits that assemble into four stacked heptameric rings, resulting in a barrel-shaped structure. The two inner rings, each composed of seven catalytic beta subunits, are sandwiched by two outer rings, each composed of seven alpha subunits. The catalytic chamber with the active sites is on the inside of the barrel. Has a gated structure, the ends of the cylinder being occluded by the N-termini of the alpha-subunits. Is capped by the proteasome-associated ATPase, ARC.

The protein localises to the cytoplasm. Its pathway is protein degradation; proteasomal Pup-dependent pathway. With respect to regulation, the formation of the proteasomal ATPase ARC-20S proteasome complex, likely via the docking of the C-termini of ARC into the intersubunit pockets in the alpha-rings, may trigger opening of the gate for substrate entry. Interconversion between the open-gate and close-gate conformations leads to a dynamic regulation of the 20S proteasome proteolysis activity. Functionally, component of the proteasome core, a large protease complex with broad specificity involved in protein degradation. This is Proteasome subunit alpha from Xylanimonas cellulosilytica (strain DSM 15894 / JCM 12276 / CECT 5975 / KCTC 9989 / LMG 20990 / NBRC 107835 / XIL07).